A 378-amino-acid chain; its full sequence is GDP-mannose-dependent alpha-mannosyltransferase (378 aa).

Belongs to the glycosyltransferase group 1 family. Glycosyltransferase 4 subfamily.

Its pathway is phospholipid metabolism; phosphatidylinositol metabolism. In terms of biological role, catalyzes the addition of a mannose residue from GDP-D-mannose to GlcAGroAc2 to generate 1,2-di-O-C16/C18:1-(alpha-D-mannopyranosyl)-(1-4)-(alpha-D-glucopyranosyluronic acid)-(1-3)-glycerol(ManGlcAGroAc2). This Mycobacterium tuberculosis (strain CDC 1551 / Oshkosh) protein is GDP-mannose-dependent alpha-mannosyltransferase (mgtA).